The chain runs to 299 residues: Peroxisomal biogenesis factor 19 (299 aa).

Positions 1 to 63 (MAAAEEGCDA…SPGDTAKDAL (63 aa)) are disordered. Residue Ala2 is modified to N-acetylalanine. Residues 2–56 (AAAEEGCDAGVEADRELEELLESALDDFDKAKPSPAPPPTTSAPDASGPQKKSPG) form a docking to the peroxisome membrane and binding to PEX3 region. The necessary for PEX19 function on peroxisome biogenesis stretch occupies residues 2 to 91 (AAAEEGCDAG…QATAEFEKAM (90 aa)). Residues 16–27 (RELEELLESALD) show a composition bias toward acidic residues. Residues Ser35, Ser54, and Ser66 each carry the phosphoserine modification. Thr236 is subject to Phosphothreonine. The residue at position 296 (Cys296) is a Cysteine methyl ester. A lipid anchor (S-farnesyl cysteine) is attached at Cys296. Positions 297-299 (LIM) are cleaved as a propeptide — removed in mature form.

Belongs to the peroxin-19 family. As to quaternary structure, interacts with a broad range of peroxisomal membrane proteins, including PEX3, PEX10, PEX11A, PEX11B, PEX12, PEX13, PEX14 and PEX16, PXMP2/PMP22, PXMP4/PMP24, SLC25A17/PMP34, ABCD1/ALDP, ABCD2/ALDRP, and ABCD3/PMP70. Also interacts with the tumor suppressor CDKN2A/p19ARF. In terms of tissue distribution, ubiquitous.

It is found in the cytoplasm. The protein resides in the peroxisome membrane. Necessary for early peroxisomal biogenesis. Acts both as a cytosolic chaperone and as an import receptor for peroxisomal membrane proteins (PMPs). Binds and stabilizes newly synthesized PMPs in the cytoplasm by interacting with their hydrophobic membrane-spanning domains, and targets them to the peroxisome membrane by binding to the integral membrane protein PEX3. Excludes CDKN2A from the nucleus and prevents its interaction with MDM2, which results in active degradation of TP53. The polypeptide is Peroxisomal biogenesis factor 19 (PEX19) (Cricetulus griseus (Chinese hamster)).